The primary structure comprises 276 residues: MVVKIGIVKVGNIGTSVLIDMILDERADREDIDVRTISSGAKMGKNQMDDVLPKIDEYNPDVIIFISPDPGAKSPSSARETLSKKNIPTIVIGDGPGERAIGSMKEQGLGYIIVKADSMIGARREFLDATEMAVFNSDVLMVLSTTGVFRLIHKTLDKVIRDIDEDKLYSLPELVITAENAVDAADFKNPYAKSKAIAAYSIACQVSSMNVRACFKTKDYHVYIPLVSAAHEMMSAASKLAYEAREIEKSNDTVVRTAHRRNGSILYGTSLNDNKE.

This sequence belongs to the MTD family.

It carries out the reaction 5,10-methylenetetrahydromethanopterin + oxidized coenzyme F420-(gamma-L-Glu)(n) + 2 H(+) = 5,10-methenyl-5,6,7,8-tetrahydromethanopterin + reduced coenzyme F420-(gamma-L-Glu)(n). Its function is as follows. Catalyzes the oxidation of methylene-H(4)MPT to methenyl-H(4)MPT(+). This Methanosphaera stadtmanae (strain ATCC 43021 / DSM 3091 / JCM 11832 / MCB-3) protein is F420-dependent methylenetetrahydromethanopterin dehydrogenase.